Consider the following 321-residue polypeptide: MSIPADIASLISDKYKSAFDNGNLKFIQTETTKTKDPKTSMPYLISHMPSLIEKPERGQTPEGEDPLGKPEEELTVIPEFGGADNKAYKLLLNKFPVIPEHTLLVTNEYQHQTDALTPTDLLTAYKLLCALDNEESDKRHMVFYNSGPASGSSLDHKHLQILQMPEKFVTFQDRLCNGKEHFLPTFNTEPLQDAKVSFAHFVLPMPESEETVDEDLLAMCYISILQRALTFFQDWLNENPELKKSYNLMLTKEWICVVPRSKAFSDEMKIGFNSTGYCGMILTKNDEVFSKITEKPELINDILLECGFPNTSGQKPNEYNY.

Residues 50–70 (SLIEKPERGQTPEGEDPLGKP) form a disordered region. Lysine 54 contacts substrate. Threonine 60 is modified (phosphothreonine). Residues 93–94 (NK), asparagine 145, and 151–154 (GSSL) contribute to the substrate site. Histidine 158 (nucleophile) is an active-site residue. Substrate-binding positions include glutamine 160, 273–275 (NST), methionine 280, and lysine 284.

It belongs to the ATP adenylyltransferase family. Monomer. The cofactor is a divalent metal cation. Post-translationally, the N-terminus is blocked.

It is found in the cytoplasm. Its subcellular location is the nucleus. It carries out the reaction ADP + ATP + H(+) = P(1),P(4)-bis(5'-adenosyl) tetraphosphate + phosphate. The enzyme catalyses sulfate + ADP + H(+) = adenosine 5'-phosphosulfate + phosphate. Ap4A phosphorylase catalyzes the phosphorolytic degradation of bis(5'-adenosyl) tetraphosphate (Ap4A) into ADP and ATP. Can also use other Np4N' nucleotides (where N and N' stand for A,C,G or U) as substrates with equal efficiency. Cannot catalyze the reverse reaction. Additionally, this enzyme can also catalyze the phosphorolytic degradation of adenosine 5'-phosphosulfate (AMPS) into ADP and sulfate, the reversible exchange reaction between inorganic phosphate and the beta-phosphate of a nucleoside diphosphate (NDP), and the synthesis of Ap4A from AMPS plus ATP. This is Protein APA1 from Saccharomyces cerevisiae (strain ATCC 204508 / S288c) (Baker's yeast).